We begin with the raw amino-acid sequence, 166 residues long: Putative lipoprotein Lxx21020 (166 aa).

Positions 1–22 (MTKTTRLLRATTVAAILLGLTG) are cleaved as a signal peptide. Residue Cys23 is the site of N-palmitoyl cysteine attachment. Cys23 is lipidated: S-diacylglycerol cysteine.

It localises to the cell membrane. The chain is Putative lipoprotein Lxx21020 from Leifsonia xyli subsp. xyli (strain CTCB07).